A 173-amino-acid polypeptide reads, in one-letter code: C-phycocyanin beta subunit (173 aa).

The residue at position 73 (N73) is an N4-methylasparagine. 2 residues coordinate (2R,3E)-phycocyanobilin: C83 and C154.

It belongs to the phycobiliprotein family. Heterodimer of an alpha and a beta subunit. Heterodimers further assemble into trimers and the trimers into hexamers. In terms of processing, contains two covalently linked bilin chromophores.

It localises to the cellular thylakoid membrane. Light-harvesting photosynthetic bile pigment-protein from the phycobiliprotein complex (phycobilisome, PBS). Phycocyanin is the major phycobiliprotein in the PBS rod. The sequence is that of C-phycocyanin beta subunit (cpcB) from Mastigocladus laminosus (Fischerella sp.).